An 89-amino-acid polypeptide reads, in one-letter code: UPF0335 protein Nwi_0989 (89 aa).

This sequence belongs to the UPF0335 family.

This Nitrobacter winogradskyi (strain ATCC 25391 / DSM 10237 / CIP 104748 / NCIMB 11846 / Nb-255) protein is UPF0335 protein Nwi_0989.